The chain runs to 328 residues: Phosphate acyltransferase (328 aa).

Belongs to the PlsX family. In terms of assembly, homodimer. Probably interacts with PlsY.

Its subcellular location is the cytoplasm. The enzyme catalyses a fatty acyl-[ACP] + phosphate = an acyl phosphate + holo-[ACP]. The protein operates within lipid metabolism; phospholipid metabolism. Its function is as follows. Catalyzes the reversible formation of acyl-phosphate (acyl-PO(4)) from acyl-[acyl-carrier-protein] (acyl-ACP). This enzyme utilizes acyl-ACP as fatty acyl donor, but not acyl-CoA. The protein is Phosphate acyltransferase of Staphylococcus aureus (strain MRSA252).